A 198-amino-acid chain; its full sequence is MICOS complex subunit Mic26 (198 aa).

An N-terminal signal peptide occupies residues 1–23 (MFKVIQRSVGPASLSLLTFRVYA). Residue Asn-63 is glycosylated (N-linked (GlcNAc...) asparagine). A helical transmembrane segment spans residues 108–128 (PGFFPRLGVIGFAGFVGLLFA).

It belongs to the apolipoprotein O/MICOS complex subunit Mic27 family. As to quaternary structure, component of the mitochondrial contact site and cristae organizing system (MICOS) complex, composed of at least MICOS10/MIC10, CHCHD3/MIC19, CHCHD6/MIC25, APOOL/MIC27, IMMT/MIC60, APOO/MIC23/MIC26 and MICOS13/MIC13. This complex was also known under the names MINOS or MitOS complex. The MICOS complex associates with mitochondrial outer membrane proteins SAMM50, MTX1 and MTX2 (together described as components of the mitochondrial outer membrane sorting assembly machinery (SAM) complex) and DNAJC11, mitochondrial inner membrane protein TMEM11 and with HSPA9. The MICOS and SAM complexes together with DNAJC11 are part of a large protein complex spanning both membranes termed the mitochondrial intermembrane space bridging (MIB) complex. Interacts with IMMT/MIC60. Interacts with MICOS10/MIC10 and APOOL/MIC27.

It is found in the mitochondrion inner membrane. The protein localises to the mitochondrion. Its subcellular location is the endoplasmic reticulum membrane. The protein resides in the golgi apparatus membrane. Its function is as follows. Component of the MICOS complex, a large protein complex of the mitochondrial inner membrane that plays crucial roles in the maintenance of crista junctions, inner membrane architecture, and formation of contact sites to the outer membrane. Plays a crucial role in crista junction formation and mitochondrial function. Can induce cardiac lipotoxicity by enhancing mitochondrial respiration and fatty acid metabolism in cardiac myoblasts. Promotes cholesterol efflux from macrophage cells. Detected in HDL, LDL and VLDL. Secreted by a microsomal triglyceride transfer protein (MTTP)-dependent mechanism, probably as a VLDL-associated protein that is subsequently transferred to HDL. In Mus musculus (Mouse), this protein is MICOS complex subunit Mic26 (Apoo).